The sequence spans 328 residues: Renalase (328 aa).

FAD-binding positions include Ala-13, 32–33, Arg-40, and 56–57; these read DK and QY. Substrate is bound by residues 57–61 and 96–98; these read YFTAR and SPD. Position 128 (Ile-128) interacts with FAD. Thr-185 is a binding site for substrate. An FAD-binding site is contributed by Asp-302. Residue Arg-308 coordinates substrate. FAD is bound at residue Val-309.

This sequence belongs to the bacterial renalase family. The cofactor is FAD.

The catalysed reaction is 1,2-dihydro-beta-NAD + O2 + H(+) = H2O2 + NAD(+). The enzyme catalyses 1,2-dihydro-beta-NADP + O2 + H(+) = H2O2 + NADP(+). It carries out the reaction 1,6-dihydro-beta-NADP + O2 + H(+) = H2O2 + NADP(+). It catalyses the reaction 1,6-dihydro-beta-NAD + O2 + H(+) = H2O2 + NAD(+). Its function is as follows. Catalyzes the oxidation of the 1,2-dihydro- and 1,6-dihydro- isomeric forms of beta-NAD(P) back to beta-NAD(P)+. Has a preference for 1,2-dihydro-beta-NAD as substrate. May serve to protect primary metabolism dehydrogenases from inhibition by the 1,2-dihydro- and 1,6-dihydro-beta-NAD(P) isomers. The protein is Renalase of Pseudomonas syringae pv. tomato (strain ATCC BAA-871 / DC3000).